We begin with the raw amino-acid sequence, 281 residues long: Probable endonuclease 4 (281 aa).

Zn(2+) contacts are provided by His-69, His-109, Glu-145, Asp-179, His-182, His-216, Asp-229, His-231, and Glu-261.

This sequence belongs to the AP endonuclease 2 family. It depends on Zn(2+) as a cofactor.

It carries out the reaction Endonucleolytic cleavage to 5'-phosphooligonucleotide end-products.. In terms of biological role, endonuclease IV plays a role in DNA repair. It cleaves phosphodiester bonds at apurinic or apyrimidinic (AP) sites, generating a 3'-hydroxyl group and a 5'-terminal sugar phosphate. The protein is Probable endonuclease 4 of Buchnera aphidicola subsp. Acyrthosiphon pisum (strain APS) (Acyrthosiphon pisum symbiotic bacterium).